Consider the following 53-residue polypeptide: IgA-inducing protein homolog (53 aa).

Positions 1 to 30 (MCSYYHMKKRSVSGCNITIFAVMFSHLSAG) are cleaved as a signal peptide.

The protein localises to the secreted. Enhances IgA secretion from B-cells stimulated via CD40. The sequence is that of IgA-inducing protein homolog (IGIP) from Homo sapiens (Human).